Consider the following 199-residue polypeptide: N-(5'-phosphoribosyl)anthranilate isomerase (199 aa).

It belongs to the TrpF family.

It carries out the reaction N-(5-phospho-beta-D-ribosyl)anthranilate = 1-(2-carboxyphenylamino)-1-deoxy-D-ribulose 5-phosphate. Its pathway is amino-acid biosynthesis; L-tryptophan biosynthesis; L-tryptophan from chorismate: step 3/5. The sequence is that of N-(5'-phosphoribosyl)anthranilate isomerase from Streptococcus pneumoniae serotype 4 (strain ATCC BAA-334 / TIGR4).